A 362-amino-acid chain; its full sequence is MIHIKNLSKTYATPHGRFEALRGIDLLIEQGEVFGIIGPSGAGKSTLVQCINLLERPDQGSISIGGQELTGLSEAQLRGQRRRIGMVFQGFNLLSRRTVYGNVALPLEIAGVPRQEIPGKVERLLALVGLEHLRDRYPSQISGGQKQRVGIARALANDPDVLLSDEATSALDPETTHNILALLRDINRKTGVTVVMITHQMEVVREICDRVAVLSHGQVVEMARTQDVFATPQHDVTRAMVSAATSSALTESTLAAVQARIAARAAEQPGSAARLWRLSLTGKDAGGALISDLARQHALDISLVQARVDDIQGVAVGTLFVLAQGTPQAVNNALAALAAHQISVEEIAHEPANDRPALHVAA.

Residues I2–V241 form the ABC transporter domain. G38–S45 lines the ATP pocket.

The protein belongs to the ABC transporter superfamily. Methionine importer (TC 3.A.1.24) family. The complex is composed of two ATP-binding proteins (MetN), two transmembrane proteins (MetI) and a solute-binding protein (MetQ).

The protein resides in the cell inner membrane. The catalysed reaction is L-methionine(out) + ATP + H2O = L-methionine(in) + ADP + phosphate + H(+). It carries out the reaction D-methionine(out) + ATP + H2O = D-methionine(in) + ADP + phosphate + H(+). Part of the ABC transporter complex MetNIQ involved in methionine import. Responsible for energy coupling to the transport system. In Bordetella avium (strain 197N), this protein is Methionine import ATP-binding protein MetN.